We begin with the raw amino-acid sequence, 313 residues long: Porphobilinogen deaminase (313 aa).

Cys-242 carries the post-translational modification S-(dipyrrolylmethanemethyl)cysteine.

The protein belongs to the HMBS family. In terms of assembly, monomer. Dipyrromethane serves as cofactor.

The catalysed reaction is 4 porphobilinogen + H2O = hydroxymethylbilane + 4 NH4(+). It functions in the pathway porphyrin-containing compound metabolism; protoporphyrin-IX biosynthesis; coproporphyrinogen-III from 5-aminolevulinate: step 2/4. In terms of biological role, tetrapolymerization of the monopyrrole PBG into the hydroxymethylbilane pre-uroporphyrinogen in several discrete steps. This Pectobacterium carotovorum subsp. carotovorum (strain PC1) protein is Porphobilinogen deaminase.